Here is a 308-residue protein sequence, read N- to C-terminus: tRNA pseudouridine synthase B (308 aa).

The active-site Nucleophile is the Asp44.

Belongs to the pseudouridine synthase TruB family. Type 1 subfamily.

The catalysed reaction is uridine(55) in tRNA = pseudouridine(55) in tRNA. Responsible for synthesis of pseudouridine from uracil-55 in the psi GC loop of transfer RNAs. This is tRNA pseudouridine synthase B from Nitratidesulfovibrio vulgaris (strain DSM 19637 / Miyazaki F) (Desulfovibrio vulgaris).